Consider the following 93-residue polypeptide: Small ribosomal subunit protein uS19 (93 aa).

This sequence belongs to the universal ribosomal protein uS19 family.

Protein S19 forms a complex with S13 that binds strongly to the 16S ribosomal RNA. The polypeptide is Small ribosomal subunit protein uS19 (Ruminiclostridium cellulolyticum (strain ATCC 35319 / DSM 5812 / JCM 6584 / H10) (Clostridium cellulolyticum)).